Reading from the N-terminus, the 397-residue chain is Alanine racemase, biosynthetic (397 aa).

The Proton acceptor; specific for D-alanine role is filled by K42. The residue at position 42 (K42) is an N6-(pyridoxal phosphate)lysine. R136 is a binding site for substrate. The active-site Proton acceptor; specific for L-alanine is the Y257. Position 305 (M305) interacts with substrate. The disordered stretch occupies residues 373 to 397; that stretch reads ANRPTEAMSNPSRAKSRPMDKQALI.

Belongs to the alanine racemase family. The cofactor is pyridoxal 5'-phosphate.

The catalysed reaction is L-alanine = D-alanine. It functions in the pathway amino-acid biosynthesis; D-alanine biosynthesis; D-alanine from L-alanine: step 1/1. It participates in cell wall biogenesis; peptidoglycan biosynthesis. Its function is as follows. Catalyzes the interconversion of L-alanine and D-alanine. Provides the D-alanine required for cell wall biosynthesis. This is Alanine racemase, biosynthetic (alr) from Mesorhizobium japonicum (strain LMG 29417 / CECT 9101 / MAFF 303099) (Mesorhizobium loti (strain MAFF 303099)).